The following is a 158-amino-acid chain: Transcription antitermination protein NusB (158 aa).

The protein belongs to the NusB family.

Its function is as follows. Involved in transcription antitermination. Required for transcription of ribosomal RNA (rRNA) genes. Binds specifically to the boxA antiterminator sequence of the ribosomal RNA (rrn) operons. The chain is Transcription antitermination protein NusB from Bartonella henselae (strain ATCC 49882 / DSM 28221 / CCUG 30454 / Houston 1) (Rochalimaea henselae).